A 152-amino-acid polypeptide reads, in one-letter code: uncharacterized protein (152 aa).

The first 16 residues, 1-16 (MRKLLISLALAIPVFA), serve as a signal peptide directing secretion. In terms of domain architecture, Cytochrome c spans 20–135 (NLLQKGYEVY…AVAYWLYHNY (116 aa)). Heme c-binding residues include cysteine 33, cysteine 36, and histidine 37.

This is an uncharacterized protein from Aquifex aeolicus (strain VF5).